The chain runs to 1460 residues: Venom prothrombin activator pseutarin-C non-catalytic subunit (1460 aa).

Positions 1 to 30 (MGRYSVSPVPKCLLLMFLGWSGLKYYQVNA) are cleaved as a signal peptide. A Plastocyanin-like 1 domain is found at 32-196 (QLREYHIAAQ…SGLIGALLIC (165 aa)). F5/8 type A domains follow at residues 32 to 330 (QLRE…LNIK) and 351 to 685 (KNWE…FLDA). Lysine 124, glutamate 139, aspartate 142, and aspartate 143 together coordinate Ca(2+). N-linked (GlcNAc...) asparagine glycosylation is present at asparagine 156. Cysteine 170 and cysteine 196 form a disulfide bridge. Residues asparagine 204 and asparagine 242 are each glycosylated (N-linked (GlcNAc...) asparagine). Plastocyanin-like domains are found at residues 206–330 (SQKF…LNIK), 351–529 (KNWE…LLVC), and 539–685 (VQNK…FLDA). Residues cysteine 251 and cysteine 332 are joined by a disulfide bond. Residues asparagine 406 and asparagine 471 are each glycosylated (N-linked (GlcNAc...) asparagine). A disulfide bridge connects residues cysteine 503 and cysteine 529. Residue asparagine 557 is glycosylated (N-linked (GlcNAc...) asparagine). Disulfide bonds link cysteine 672/cysteine 1032, cysteine 966/cysteine 992, cysteine 1147/cysteine 1298, and cysteine 1303/cysteine 1457. A b region spans residues 693-818 (GNEEEEEDDG…PDDIAGRYLR (126 aa)). Residues 773–818 (SFKGSVAEEELKHTALALEEDAHASDPRIDSNSARNPDDIAGRYLR) constitute a propeptide, activation peptide (connecting region). 2 consecutive Plastocyanin-like domains span residues 824 to 992 (NKRR…ILIC) and 1001 to 1143 (NRTI…FTVI). The F5/8 type A 3 domain maps to 824–1143 (NKRRYYIAAE…RGMQALFTVI (320 aa)). 4 residues coordinate Ca(2+): lysine 920, phenylalanine 935, aspartate 938, and aspartate 939. The N-linked (GlcNAc...) asparagine glycan is linked to asparagine 944. Residues asparagine 1001 and asparagine 1180 are each glycosylated (N-linked (GlcNAc...) asparagine). 2 F5/8 type C domains span residues 1147-1298 (CKLP…LLGC) and 1303-1457 (CSVP…LFGC).

It belongs to the multicopper oxidase family. As to quaternary structure, heterodimer of a light and a heavy chains; non-disulfide-linked. The interaction between the two chains is calcium-dependent. Found in its active form associated with pseutarin-C catalytic subunit (AC Q56VR3). Post-translationally, in physiological conditions, blood coagulation factor V and factor Va are inactivated by activated protein C (APC) through proteolytic degradation of the heavy chain. However, pseutarin-C non-catalytic subunit (factor V-like protein) retains its full activity even at high concentration of APC. This has two explanations: this protein has only one of the three cleavage sites present in factor V that are targeted by the APC for inactivation, and the binding with the catalytic subunit protect the cleavage site from inactivation. In terms of tissue distribution, expressed by the venom gland.

The protein localises to the secreted. Snake prothrombin activator that attacks the hemostatic system of prey. This non-catalytic subunit is functionally similar to blood coagulation factor V. It serves as a critical cofactor for the prothrombinase activity of the catalytic subunit, which is similar to the blood coagulation factor X. The complex converts prothrombin to thrombin by sequential cleavage at two positions, Arg-320 followed by Arg-271. Cleavage at Arg-320 produces an active intermediate known as meizothrombin. Meizothrombin is the 'second' substrate for prothrombinase, and it docks in an altered manner to present the second cleavage site (271). Cleavage at Arg-271 releases active thrombin from its pro-fragment. This order of events is reversed if the protease component of prothrombinase is used on its own, suggesting that the 271 site is inherently more accessible to proteolysis. The complex converts prothrombin to thrombin in presence but also in the absence of membrane. The polypeptide is Venom prothrombin activator pseutarin-C non-catalytic subunit (Pseudonaja textilis (Eastern brown snake)).